Here is a 462-residue protein sequence, read N- to C-terminus: MSYFPRTYAHLMRNVLAHNKGNIYLQIGTQLHDTQIKIRFNGVRYISRNHGGKQQHINTAPIEFTPNFGYGDRTSNCNKKVESTAMKTLRCTDDISTSSGSEATTDASTQLPFNVKLVDPMVRKSKRPSHAISEGLNMKTLKKKVIMPYLQLTKPRLTILVMLSAICSYALSPYPASVNELLCLTVGTTLCSGSANAINMGREPEFDRQMVRTQARPVVRGDVTPTQAFEFAALIGTLGVSILYFGVNPTVAILGASNIALYGWAYTSMKRKHIINTWLGALVGMVPPLMGWAAASPLSHPGSWCLAGLLFAWQFPHFNTLSHNIRNEYKNAGYVMTAWKNPLLNARVSLRYSILMFPLCFGLSYFNITDWYYQIDSGLINAWLTFWAFKFYWQQRINYSAKTLKDNVKFNKGLSVANIYARKTFMASVLHLPAILILAIIHKKGRWDWIYPGEAKRPQERF.

A mitochondrion-targeting transit peptide spans 1–30 (MSYFPRTYAHLMRNVLAHNKGNIYLQIGTQ). 7 consecutive transmembrane segments (helical) span residues 158–178 (TILV…PASV), 234–254 (LIGT…VAIL), 274–294 (IINT…GWAA), 298–318 (LSHP…FPHF), 352–372 (YSIL…TDWY), 373–393 (YQID…KFYW), and 425–445 (FMAS…HKKG).

It belongs to the UbiA prenyltransferase family. As to quaternary structure, forms ~370 kDa homooligomeric complexes.

The protein localises to the mitochondrion. The protein resides in the mitochondrion membrane. The enzyme catalyses heme b + (2E,6E)-farnesyl diphosphate + H2O = Fe(II)-heme o + diphosphate. The protein operates within porphyrin-containing compound metabolism; heme O biosynthesis; heme O from protoheme: step 1/1. With respect to regulation, positively regulated by the hydroxylated intermediate (heme I) formed at the subsequent step, or by HAS/COX15 itself. Its function is as follows. Catalyzes the first reaction in the biosynthesis of heme A, a prosthetic group of mitochondrial cytochrome c oxidase (CcO). Heme A is synthesized from heme B by two sequential enzymatic reactions catalyzed by heme O synthase (HOS/COX10) and heme A synthase (HAS/COX15). HOS converts heme B (protoheme IX) to heme O by substitution of the vinyl group on carbon 2 of heme B porphyrin ring with a hydroxyethyl farnesyl side group. This Saccharomyces cerevisiae (strain ATCC 204508 / S288c) (Baker's yeast) protein is Protoheme IX farnesyltransferase, mitochondrial (COX10).